The primary structure comprises 153 residues: Large ribosomal subunit protein uL13 (153 aa).

The segment at E134–A153 is disordered.

Belongs to the universal ribosomal protein uL13 family. Part of the 50S ribosomal subunit.

This protein is one of the early assembly proteins of the 50S ribosomal subunit, although it is not seen to bind rRNA by itself. It is important during the early stages of 50S assembly. This is Large ribosomal subunit protein uL13 from Methylorubrum extorquens (strain CM4 / NCIMB 13688) (Methylobacterium extorquens).